The primary structure comprises 228 residues: Urease accessory protein UreF (228 aa).

It belongs to the UreF family. UreD, UreF and UreG form a complex that acts as a GTP-hydrolysis-dependent molecular chaperone, activating the urease apoprotein by helping to assemble the nickel containing metallocenter of UreC. The UreE protein probably delivers the nickel.

The protein resides in the cytoplasm. Required for maturation of urease via the functional incorporation of the urease nickel metallocenter. The sequence is that of Urease accessory protein UreF from Brucella ovis (strain ATCC 25840 / 63/290 / NCTC 10512).